A 337-amino-acid chain; its full sequence is Inositol 2-dehydrogenase (337 aa).

It belongs to the Gfo/Idh/MocA family. Homotetramer.

It carries out the reaction myo-inositol + NAD(+) = scyllo-inosose + NADH + H(+). Involved in the oxidation of myo-inositol (MI) to 2-keto-myo-inositol (2KMI or 2-inosose). This is Inositol 2-dehydrogenase from Burkholderia cenocepacia (strain HI2424).